Here is a 92-residue protein sequence, read N- to C-terminus: Precursor of elicitor peptide 1 (92 aa).

A propeptide spanning residues 1 to 69 is cleaved from the precursor; that stretch reads MEKSDRRSEE…EKEEVVVTSR (69 aa). Residues 35–92 are disordered; it reads HQDSPTTSSPGTSKQPKEEKEDVTMEKEEVVVTSRATKVKAKQRGKEKVSSGRPGQHN. The span at 37 to 48 shows a compositional bias: polar residues; it reads DSPTTSSPGTSK. Residues 49 to 64 are compositionally biased toward basic and acidic residues; that stretch reads QPKEEKEDVTMEKEEV.

It belongs to the brassicaceae elicitor peptide family. As to quaternary structure, interacts with its receptor PEPR1.

In terms of biological role, elicitor of plant defense. Induces the production of plant defensin (PDF1.2) and of H(2)O(2). Promotes resistance to the root fungal pathogen P.irregulare. Triggers the expression of several PROSCOOP genes (e.g. PROSCOOP2, PROSCOOP7, PROSCOOP8, PROSCOOP12 and PROSCOOP13). The sequence is that of Precursor of elicitor peptide 1 from Arabidopsis thaliana (Mouse-ear cress).